Reading from the N-terminus, the 137-residue chain is Large ribosomal subunit protein uL16 (137 aa).

The protein belongs to the universal ribosomal protein uL16 family. As to quaternary structure, part of the 50S ribosomal subunit.

In terms of biological role, binds 23S rRNA and is also seen to make contacts with the A and possibly P site tRNAs. In Sinorhizobium medicae (strain WSM419) (Ensifer medicae), this protein is Large ribosomal subunit protein uL16.